Reading from the N-terminus, the 406-residue chain is Glucose-6-phosphate isomerase (406 aa).

E259 serves as the catalytic Proton donor. Catalysis depends on residues H284 and K397.

Belongs to the GPI family.

The protein resides in the cytoplasm. The catalysed reaction is alpha-D-glucose 6-phosphate = beta-D-fructose 6-phosphate. Its pathway is carbohydrate biosynthesis; gluconeogenesis. The protein operates within carbohydrate degradation; glycolysis; D-glyceraldehyde 3-phosphate and glycerone phosphate from D-glucose: step 2/4. Catalyzes the reversible isomerization of glucose-6-phosphate to fructose-6-phosphate. The sequence is that of Glucose-6-phosphate isomerase from Campylobacter jejuni subsp. jejuni serotype O:2 (strain ATCC 700819 / NCTC 11168).